The chain runs to 475 residues: Tryptophan synthase beta chain 2, chloroplastic (475 aa).

Over residues 1–21 (MATASTAATFRPSSVSASSEL) the composition is skewed to polar residues. The tract at residues 1-44 (MATASTAATFRPSSVSASSELTHLRSPSKLPKFTPLPSARSRSS) is disordered. The transit peptide at 1–51 (MATASTAATFRPSSVSASSELTHLRSPSKLPKFTPLPSARSRSSSSFSVSC) directs the protein to the chloroplast. An N-acetylthreonine modification is found at T52. An N6-(pyridoxal phosphate)lysine modification is found at K170.

Belongs to the TrpB family. In terms of assembly, tetramer of two alpha and two beta chains. It depends on pyridoxal 5'-phosphate as a cofactor.

The protein resides in the plastid. It is found in the chloroplast. The catalysed reaction is (1S,2R)-1-C-(indol-3-yl)glycerol 3-phosphate + L-serine = D-glyceraldehyde 3-phosphate + L-tryptophan + H2O. It participates in amino-acid biosynthesis; L-tryptophan biosynthesis; L-tryptophan from chorismate: step 5/5. Functionally, the beta subunit is responsible for the synthesis of L-tryptophan from indole and L-serine. The protein is Tryptophan synthase beta chain 2, chloroplastic (TSB2) of Arabidopsis thaliana (Mouse-ear cress).